Consider the following 345-residue polypeptide: tRNA N6-adenosine threonylcarbamoyltransferase (345 aa).

The Fe cation site is built by H111 and H115. Substrate contacts are provided by residues 136 to 140 (LVSGG), D169, G182, and N279. D307 is a binding site for Fe cation.

This sequence belongs to the KAE1 / TsaD family. It depends on Fe(2+) as a cofactor.

It localises to the cytoplasm. The enzyme catalyses L-threonylcarbamoyladenylate + adenosine(37) in tRNA = N(6)-L-threonylcarbamoyladenosine(37) in tRNA + AMP + H(+). In terms of biological role, required for the formation of a threonylcarbamoyl group on adenosine at position 37 (t(6)A37) in tRNAs that read codons beginning with adenine. Is involved in the transfer of the threonylcarbamoyl moiety of threonylcarbamoyl-AMP (TC-AMP) to the N6 group of A37, together with TsaE and TsaB. TsaD likely plays a direct catalytic role in this reaction. The sequence is that of tRNA N6-adenosine threonylcarbamoyltransferase from Actinobacillus succinogenes (strain ATCC 55618 / DSM 22257 / CCUG 43843 / 130Z).